The following is a 357-amino-acid chain: NADH-quinone oxidoreductase subunit H (357 aa).

8 helical membrane-spanning segments follow: residues 20 to 40 (WLVVWTIIKIVIIAVPIILCV), 92 to 112 (ILFIVAPVVTLMPALAAWAVV), 127 to 147 (LLYVMAITSIGVYGVIVAGWA), 165 to 185 (VSYELAISFVLVTVLLVSGSL), 206 to 226 (FLSWNWLPLLPLFVIYVISAV), 268 to 288 (ILLSAMASIMFLGGWMSPIDI), 294 to 314 (IPGWIWLGIKTFFVVSLFIWF), and 329 to 349 (LGWKIFIPLTGVWLVVVAIWM).

This sequence belongs to the complex I subunit 1 family. NDH-1 is composed of 14 different subunits. Subunits NuoA, H, J, K, L, M, N constitute the membrane sector of the complex.

The protein localises to the cell inner membrane. The enzyme catalyses a quinone + NADH + 5 H(+)(in) = a quinol + NAD(+) + 4 H(+)(out). Its function is as follows. NDH-1 shuttles electrons from NADH, via FMN and iron-sulfur (Fe-S) centers, to quinones in the respiratory chain. The immediate electron acceptor for the enzyme in this species is believed to be ubiquinone. Couples the redox reaction to proton translocation (for every two electrons transferred, four hydrogen ions are translocated across the cytoplasmic membrane), and thus conserves the redox energy in a proton gradient. This subunit may bind ubiquinone. This is NADH-quinone oxidoreductase subunit H from Bordetella avium (strain 197N).